Consider the following 598-residue polypeptide: Phospholipase B-like protein G (598 aa).

A signal peptide spans 1 to 24 (MIKSYYLFFIILIFLIFINNFILC). Residues Asn50, Asn98, Asn173, Asn341, Asn368, Asn450, Asn480, Asn526, and Asn576 are each glycosylated (N-linked (GlcNAc...) asparagine).

It belongs to the phospholipase B-like family.

The protein localises to the secreted. Functionally, probable phospholipase. This is Phospholipase B-like protein G (plbG) from Dictyostelium discoideum (Social amoeba).